Consider the following 1405-residue polypeptide: DNA-directed RNA polymerase subunit beta' (1405 aa).

Zn(2+) is bound by residues C65, C67, C80, and C83. Mg(2+) is bound by residues D468, D470, and D472. C811, C885, C892, and C895 together coordinate Zn(2+).

The protein belongs to the RNA polymerase beta' chain family. The RNAP catalytic core consists of 2 alpha, 1 beta, 1 beta' and 1 omega subunit. When a sigma factor is associated with the core the holoenzyme is formed, which can initiate transcription. Mg(2+) serves as cofactor. Zn(2+) is required as a cofactor.

It catalyses the reaction RNA(n) + a ribonucleoside 5'-triphosphate = RNA(n+1) + diphosphate. In terms of biological role, DNA-dependent RNA polymerase catalyzes the transcription of DNA into RNA using the four ribonucleoside triphosphates as substrates. This chain is DNA-directed RNA polymerase subunit beta', found in Azobacteroides pseudotrichonymphae genomovar. CFP2.